A 61-amino-acid chain; its full sequence is Short neurotoxin 2 (61 aa).

Disulfide bonds link cysteine 3–cysteine 23, cysteine 17–cysteine 40, cysteine 42–cysteine 53, and cysteine 54–cysteine 59.

This sequence belongs to the three-finger toxin family. Short-chain subfamily. Type I alpha-neurotoxin sub-subfamily. Expressed by the venom gland.

The protein resides in the secreted. Functionally, binds to muscle nicotinic acetylcholine receptor (nAChR) and inhibit acetylcholine from binding to the receptor, thereby impairing neuromuscular transmission. The chain is Short neurotoxin 2 from Naja haje haje (Egyptian cobra).